We begin with the raw amino-acid sequence, 386 residues long: Protein RecA (386 aa).

Gly-76–Thr-83 contacts ATP. The interval Phe-362–Asn-386 is disordered.

The protein belongs to the RecA family.

The protein localises to the cytoplasm. Its function is as follows. Can catalyze the hydrolysis of ATP in the presence of single-stranded DNA, the ATP-dependent uptake of single-stranded DNA by duplex DNA, and the ATP-dependent hybridization of homologous single-stranded DNAs. It interacts with LexA causing its activation and leading to its autocatalytic cleavage. The chain is Protein RecA from Corynebacterium efficiens (strain DSM 44549 / YS-314 / AJ 12310 / JCM 11189 / NBRC 100395).